Here is a 143-residue protein sequence, read N- to C-terminus: Putative pre-16S rRNA nuclease (143 aa).

It belongs to the YqgF nuclease family.

Its subcellular location is the cytoplasm. Functionally, could be a nuclease involved in processing of the 5'-end of pre-16S rRNA. This chain is Putative pre-16S rRNA nuclease, found in Lactobacillus johnsonii (strain CNCM I-12250 / La1 / NCC 533).